Reading from the N-terminus, the 172-residue chain is Translation initiation factor IF-3 (172 aa).

Belongs to the IF-3 family. Monomer.

The protein localises to the cytoplasm. Its function is as follows. IF-3 binds to the 30S ribosomal subunit and shifts the equilibrium between 70S ribosomes and their 50S and 30S subunits in favor of the free subunits, thus enhancing the availability of 30S subunits on which protein synthesis initiation begins. This is Translation initiation factor IF-3 from Oceanobacillus iheyensis (strain DSM 14371 / CIP 107618 / JCM 11309 / KCTC 3954 / HTE831).